The sequence spans 420 residues: Corticotropin-releasing factor receptor 1 (420 aa).

Positions 1–28 (MVPGPRPALLLLLFLLQAFLLWDSPVAA) are cleaved as a signal peptide. At 29–116 (SIQEQYCESL…CQEILSEEKR (88 aa)) the chain is on the extracellular side. 3 disulfide bridges follow: C35/C59, C49/C92, and C73/C107. N43, N50, N83, N95, and N103 each carry an N-linked (GlcNAc...) asparagine glycan. Residues 117–147 (SKLHYHIAVIINYLGHCVSLGTLLVAFVLFM) form a helical membrane-spanning segment. The Cytoplasmic segment spans residues 148-154 (RLRSIRC). A helical membrane pass occupies residues 155–179 (LRNIIHWNLITAFILRNATWFVVQL). Residues 180–194 (TMNPEVHESNVVWCR) are Extracellular-facing. A disulfide bridge connects residues C193 and C263. The helical transmembrane segment at 195-223 (LVTAAYNYFHVTNFFWMFGEGCYLHTAIV) threads the bilayer. At 224–230 (LTYSTDK) the chain is on the cytoplasmic side. A helical membrane pass occupies residues 231–258 (LRKWMFICIGWCIPFPIIVAWAIGKLYY). The Extracellular portion of the chain corresponds to 259 to 274 (DNEKCWFGKRAGVYTD). The helical transmembrane segment at 275-300 (YIYQGPMILVLLINFIFLFNIVRILM) threads the bilayer. Residues 301 to 311 (TKLRASTTSET) are Cytoplasmic-facing. Residues 312 to 336 (IQYRKAVKATLVLLSLLGITYMLFF) form a helical membrane-spanning segment. Topologically, residues 337 to 343 (VNPGEDE) are extracellular. A helical membrane pass occupies residues 344-373 (ISRIVFIYFNSFLESFQGFFVSVFYCFLNS). Topologically, residues 374–420 (EVRSAVRKRWHRWQDKHSIRARVARAMSIPTSPTRVSFHSIKQSSAV) are cytoplasmic.

This sequence belongs to the G-protein coupled receptor 2 family. In terms of assembly, interacts (via N-terminal extracellular domain) with CRF and UCN.

It localises to the cell membrane. Its function is as follows. G-protein coupled receptor for CRH (corticotropin-releasing factor) and UCN (urocortin). Has high affinity for CRH and UCN. Ligand binding causes a conformation change that triggers signaling via guanine nucleotide-binding proteins (G proteins) and down-stream effectors, such as adenylate cyclase. Promotes the activation of adenylate cyclase, leading to increased intracellular cAMP levels. The sequence is that of Corticotropin-releasing factor receptor 1 (CRHR1) from Gallus gallus (Chicken).